A 136-amino-acid polypeptide reads, in one-letter code: Large ribosomal subunit protein uL16 (136 aa).

Belongs to the universal ribosomal protein uL16 family. Part of the 50S ribosomal subunit.

Binds 23S rRNA and is also seen to make contacts with the A and possibly P site tRNAs. The chain is Large ribosomal subunit protein uL16 from Orientia tsutsugamushi (strain Ikeda) (Rickettsia tsutsugamushi).